The following is a 361-amino-acid chain: Chitin synthase export chaperone (361 aa).

Transmembrane regions (helical) follow at residues 48–68 (IIFQPATCILHIAALVMATIM), 86–106 (LFFYMYIWVELFAIFLDSAII), 119–139 (IYAGSVGALYWCLLLNGFVGF), 150–170 (LWFLRISSLVVGAVCFGIPVA), 184–204 (TVGLFITYLVFPCVCVLIYFI), 218–238 (WVIGDLLFMAGFYIAGVLLLV), and 250–270 (HYVDGVFFSTLAFLFAVMMVY).

The protein belongs to the CHS7 family. Interacts with CHS3.

The protein resides in the endoplasmic reticulum membrane. Its function is as follows. Chaperone required for the export of the chitin synthase CHS3 from the endoplasmic reticulum. This is Chitin synthase export chaperone (CHS7) from Cryptococcus neoformans var. neoformans serotype D (strain JEC21 / ATCC MYA-565) (Filobasidiella neoformans).